Consider the following 342-residue polypeptide: Phosphate acyltransferase (342 aa).

The protein belongs to the PlsX family. In terms of assembly, homodimer. Probably interacts with PlsY.

Its subcellular location is the cytoplasm. It catalyses the reaction a fatty acyl-[ACP] + phosphate = an acyl phosphate + holo-[ACP]. It functions in the pathway lipid metabolism; phospholipid metabolism. In terms of biological role, catalyzes the reversible formation of acyl-phosphate (acyl-PO(4)) from acyl-[acyl-carrier-protein] (acyl-ACP). This enzyme utilizes acyl-ACP as fatty acyl donor, but not acyl-CoA. This is Phosphate acyltransferase from Shewanella halifaxensis (strain HAW-EB4).